The following is a 419-amino-acid chain: Glycine, glutamate and proline-rich protein (419 aa).

The first 16 residues, methionine 1 to cysteine 16, serve as a signal peptide directing secretion. Positions valine 74–arginine 152 are disordered. The segment covering arginine 76–glycine 85 has biased composition (acidic residues). Residues threonine 86–glutamate 130 show a composition bias toward basic and acidic residues.

This sequence in the C-terminal section; belongs to the glycosyl hydrolase 23 family. As to expression, component of the acid-insoluble organic matrix of calcified layers of the shell (at protein level).

The protein resides in the secreted. The polypeptide is Glycine, glutamate and proline-rich protein (Lottia gigantea (Giant owl limpet)).